The primary structure comprises 175 residues: Sec-independent protein translocase protein TatB (175 aa).

Residues M1 to G21 traverse the membrane as a helical segment. 2 disordered regions span residues K100–E132 and Q155–S175. The span at E111–E132 shows a compositional bias: low complexity.

The protein belongs to the TatB family. The Tat system comprises two distinct complexes: a TatABC complex, containing multiple copies of TatA, TatB and TatC subunits, and a separate TatA complex, containing only TatA subunits. Substrates initially bind to the TatABC complex, which probably triggers association of the separate TatA complex to form the active translocon.

It is found in the cell inner membrane. Its function is as follows. Part of the twin-arginine translocation (Tat) system that transports large folded proteins containing a characteristic twin-arginine motif in their signal peptide across membranes. Together with TatC, TatB is part of a receptor directly interacting with Tat signal peptides. TatB may form an oligomeric binding site that transiently accommodates folded Tat precursor proteins before their translocation. This Bradyrhizobium diazoefficiens (strain JCM 10833 / BCRC 13528 / IAM 13628 / NBRC 14792 / USDA 110) protein is Sec-independent protein translocase protein TatB.